The primary structure comprises 216 residues: Thymidine kinase (216 aa).

Residues 9 to 16 and 86 to 89 contribute to the ATP site; these read GTMDCGKS and DEAQ. E87 functions as the Proton acceptor in the catalytic mechanism.

It belongs to the thymidine kinase family. In terms of assembly, homotetramer.

It is found in the cytoplasm. The catalysed reaction is thymidine + ATP = dTMP + ADP + H(+). The chain is Thymidine kinase from Streptomyces coelicolor (strain ATCC BAA-471 / A3(2) / M145).